Consider the following 282-residue polypeptide: NADPH-dependent 7-cyano-7-deazaguanine reductase (282 aa).

88 to 90 (IES) is a substrate binding site. 90–91 (SK) is a binding site for NADPH. Catalysis depends on Cys190, which acts as the Thioimide intermediate. The Proton donor role is filled by Asp197. 229 to 230 (HE) provides a ligand contact to substrate. 258–259 (RG) serves as a coordination point for NADPH.

Belongs to the GTP cyclohydrolase I family. QueF type 2 subfamily. Homodimer.

Its subcellular location is the cytoplasm. The enzyme catalyses 7-aminomethyl-7-carbaguanine + 2 NADP(+) = 7-cyano-7-deazaguanine + 2 NADPH + 3 H(+). It functions in the pathway tRNA modification; tRNA-queuosine biosynthesis. Functionally, catalyzes the NADPH-dependent reduction of 7-cyano-7-deazaguanine (preQ0) to 7-aminomethyl-7-deazaguanine (preQ1). The chain is NADPH-dependent 7-cyano-7-deazaguanine reductase from Salmonella schwarzengrund (strain CVM19633).